An 80-amino-acid chain; its full sequence is MAMDQKRLDRINELAHKAKAEGLTPEETMERQELRDAYLKDFRSSFRSQVEMLQVYDKEGKEVTPEKVKDIQREKGLRDD.

Residues Glu59–Asp80 are disordered.

Belongs to the UPF0291 family.

Its subcellular location is the cytoplasm. The chain is UPF0291 protein LCA_1274 from Latilactobacillus sakei subsp. sakei (strain 23K) (Lactobacillus sakei subsp. sakei).